We begin with the raw amino-acid sequence, 107 residues long: Cell cycle protein GpsB (107 aa).

Residues 32–65 (LDNVIQDYETYISEIEELKAEIERLKNQNTHPKS) adopt a coiled-coil conformation. A disordered region spans residues 57-80 (KNQNTHPKSPSTENRHAMVQPTRV). Positions 58–68 (NQNTHPKSPST) are enriched in polar residues.

It belongs to the GpsB family. Forms polymers through the coiled coil domains. Interacts with PBP1, MreC and EzrA.

The protein resides in the cytoplasm. Divisome component that associates with the complex late in its assembly, after the Z-ring is formed, and is dependent on DivIC and PBP2B for its recruitment to the divisome. Together with EzrA, is a key component of the system that regulates PBP1 localization during cell cycle progression. Its main role could be the removal of PBP1 from the cell pole after pole maturation is completed. Also contributes to the recruitment of PBP1 to the division complex. Not essential for septum formation. This chain is Cell cycle protein GpsB, found in Streptococcus uberis (strain ATCC BAA-854 / 0140J).